A 323-amino-acid chain; its full sequence is Synaptonemal complex central element protein 1 (323 aa).

The span at 1–10 (MAGRPGSSNA) shows a compositional bias: polar residues. 2 disordered regions span residues 1–31 (MAGR…SSQK) and 294–323 (KQEE…PSTK). 2 stretches are compositionally biased toward basic and acidic residues: residues 20 to 31 (DEARGQAESSQK) and 313 to 323 (SEEKDQEPSTK). Residues 25–290 (QAESSQKIED…EKLGVQVLAQ (266 aa)) are a coiled coil.

It belongs to the SYCE family. In terms of assembly, homodimer. Found in a complex with SYCP1 and SYCE2. Interacts with SYCP1, SYCE2 and SYCE3. Interacts with SIX6OS1.

The protein resides in the nucleus. It is found in the chromosome. Its function is as follows. Major component of the transverse central element of synaptonemal complexes (SCS), formed between homologous chromosomes during meiotic prophase. Requires SYCP1 in order to be incorporated into the central element. May have a role in the synaptonemal complex assembly, stabilization and recombination. The protein is Synaptonemal complex central element protein 1 (SYCE1) of Bos taurus (Bovine).